The chain runs to 105 residues: Small ribosomal subunit protein uS10 (105 aa).

This sequence belongs to the universal ribosomal protein uS10 family. As to quaternary structure, part of the 30S ribosomal subunit.

Functionally, involved in the binding of tRNA to the ribosomes. This chain is Small ribosomal subunit protein uS10, found in Chlamydia abortus (strain DSM 27085 / S26/3) (Chlamydophila abortus).